The chain runs to 99 residues: Integration host factor subunit alpha (99 aa).

Belongs to the bacterial histone-like protein family. As to quaternary structure, heterodimer of an alpha and a beta chain.

This protein is one of the two subunits of integration host factor, a specific DNA-binding protein that functions in genetic recombination as well as in transcriptional and translational control. The protein is Integration host factor subunit alpha (ihfA) of Mannheimia haemolytica (Pasteurella haemolytica).